We begin with the raw amino-acid sequence, 305 residues long: Glycine--tRNA ligase alpha subunit (305 aa).

It belongs to the class-II aminoacyl-tRNA synthetase family. As to quaternary structure, tetramer of two alpha and two beta subunits.

The protein resides in the cytoplasm. The enzyme catalyses tRNA(Gly) + glycine + ATP = glycyl-tRNA(Gly) + AMP + diphosphate. The chain is Glycine--tRNA ligase alpha subunit from Streptococcus pneumoniae serotype 4 (strain ATCC BAA-334 / TIGR4).